An 823-amino-acid polypeptide reads, in one-letter code: Leucine--tRNA ligase (823 aa).

The short motif at P55 to H65 is the 'HIGH' region element. Residues K590 to S594 carry the 'KMSKS' region motif. ATP is bound at residue K593.

The protein belongs to the class-I aminoacyl-tRNA synthetase family.

The protein resides in the cytoplasm. The enzyme catalyses tRNA(Leu) + L-leucine + ATP = L-leucyl-tRNA(Leu) + AMP + diphosphate. This is Leucine--tRNA ligase from Deinococcus radiodurans (strain ATCC 13939 / DSM 20539 / JCM 16871 / CCUG 27074 / LMG 4051 / NBRC 15346 / NCIMB 9279 / VKM B-1422 / R1).